The following is a 221-amino-acid chain: Ribonuclease T (221 aa).

The region spanning 20–194 (VVIDIETAGF…YDTLQTANLF (175 aa)) is the Exonuclease domain. Mg(2+)-binding residues include D23, E25, H181, and D186. The active-site Proton donor/acceptor is H181.

It belongs to the RNase T family. As to quaternary structure, homodimer. Mg(2+) serves as cofactor.

In terms of biological role, trims short 3' overhangs of a variety of RNA species, leaving a one or two nucleotide 3' overhang. Responsible for the end-turnover of tRNA: specifically removes the terminal AMP residue from uncharged tRNA (tRNA-C-C-A). Also appears to be involved in tRNA biosynthesis. The chain is Ribonuclease T from Buchnera aphidicola subsp. Acyrthosiphon pisum (strain APS) (Acyrthosiphon pisum symbiotic bacterium).